The following is a 291-amino-acid chain: Nitrogenase iron protein 1 (291 aa).

10 to 17 (GKGGIGKS) is an ATP binding site. [4Fe-4S] cluster is bound at residue Cys-98. Residue Arg-101 is modified to ADP-ribosylarginine; by dinitrogenase reductase ADP-ribosyltransferase. Cys-133 is a binding site for [4Fe-4S] cluster.

Belongs to the NifH/BchL/ChlL family. Homodimer. [4Fe-4S] cluster is required as a cofactor. Post-translationally, the reversible ADP-ribosylation of Arg-101 inactivates the nitrogenase reductase and regulates nitrogenase activity.

It catalyses the reaction N2 + 8 reduced [2Fe-2S]-[ferredoxin] + 16 ATP + 16 H2O = H2 + 8 oxidized [2Fe-2S]-[ferredoxin] + 2 NH4(+) + 16 ADP + 16 phosphate + 6 H(+). The key enzymatic reactions in nitrogen fixation are catalyzed by the nitrogenase complex, which has 2 components: the iron protein (component 2) and a component 1 which is either a molybdenum-iron protein, a vanadium-iron, or an iron-iron protein. The chain is Nitrogenase iron protein 1 (nifH1) from Azotobacter chroococcum mcd 1.